Here is a 305-residue protein sequence, read N- to C-terminus: tRNA uridine(34) hydroxylase (305 aa).

The Rhodanese domain occupies 125 to 219; that stretch reads ADENTVVVDT…YLEEVPREQS (95 aa). Cysteine 179 (cysteine persulfide intermediate) is an active-site residue.

Belongs to the TrhO family.

It carries out the reaction uridine(34) in tRNA + AH2 + O2 = 5-hydroxyuridine(34) in tRNA + A + H2O. Catalyzes oxygen-dependent 5-hydroxyuridine (ho5U) modification at position 34 in tRNAs. The protein is tRNA uridine(34) hydroxylase of Brucella canis (strain ATCC 23365 / NCTC 10854 / RM-666).